Here is a 147-residue protein sequence, read N- to C-terminus: D-aminoacyl-tRNA deacylase (147 aa).

The Gly-cisPro motif, important for rejection of L-amino acids motif lies at 137 to 138; that stretch reads GP.

Belongs to the DTD family. As to quaternary structure, homodimer.

Its subcellular location is the cytoplasm. It catalyses the reaction glycyl-tRNA(Ala) + H2O = tRNA(Ala) + glycine + H(+). The catalysed reaction is a D-aminoacyl-tRNA + H2O = a tRNA + a D-alpha-amino acid + H(+). An aminoacyl-tRNA editing enzyme that deacylates mischarged D-aminoacyl-tRNAs. Also deacylates mischarged glycyl-tRNA(Ala), protecting cells against glycine mischarging by AlaRS. Acts via tRNA-based rather than protein-based catalysis; rejects L-amino acids rather than detecting D-amino acids in the active site. By recycling D-aminoacyl-tRNA to D-amino acids and free tRNA molecules, this enzyme counteracts the toxicity associated with the formation of D-aminoacyl-tRNA entities in vivo and helps enforce protein L-homochirality. This is D-aminoacyl-tRNA deacylase from Acinetobacter baumannii (strain AYE).